Here is a 179-residue protein sequence, read N- to C-terminus: ATP synthase subunit delta (179 aa).

The protein belongs to the ATPase delta chain family. In terms of assembly, F-type ATPases have 2 components, F(1) - the catalytic core - and F(0) - the membrane proton channel. F(1) has five subunits: alpha(3), beta(3), gamma(1), delta(1), epsilon(1). F(0) has three main subunits: a(1), b(2) and c(10-14). The alpha and beta chains form an alternating ring which encloses part of the gamma chain. F(1) is attached to F(0) by a central stalk formed by the gamma and epsilon chains, while a peripheral stalk is formed by the delta and b chains.

The protein resides in the cell membrane. Its function is as follows. F(1)F(0) ATP synthase produces ATP from ADP in the presence of a proton or sodium gradient. F-type ATPases consist of two structural domains, F(1) containing the extramembraneous catalytic core and F(0) containing the membrane proton channel, linked together by a central stalk and a peripheral stalk. During catalysis, ATP synthesis in the catalytic domain of F(1) is coupled via a rotary mechanism of the central stalk subunits to proton translocation. Functionally, this protein is part of the stalk that links CF(0) to CF(1). It either transmits conformational changes from CF(0) to CF(1) or is implicated in proton conduction. The polypeptide is ATP synthase subunit delta (Staphylococcus haemolyticus (strain JCSC1435)).